We begin with the raw amino-acid sequence, 652 residues long: Carboxypeptidase S1 homolog A (652 aa).

A signal peptide spans 1–19; the sequence is MRFAASIAVALPVIHAASA. A disulfide bridge links Cys50 with Cys121. Residues Asn77, Asn132, Asn161, Asn168, Asn184, and Asn202 are each glycosylated (N-linked (GlcNAc...) asparagine). Ser238 is an active-site residue. N-linked (GlcNAc...) asparagine glycosylation is found at Asn260, Asn299, Asn347, and Asn410. Intrachain disulfides connect Cys325–Cys361 and Cys332–Cys354. Residue Asp458 is part of the active site. Cys461 serves as a coordination point for substrate. N-linked (GlcNAc...) asparagine glycans are attached at residues Asn474, Asn492, and Asn505. His516 is a catalytic residue. Position 517 (Glu517) interacts with substrate. Residues 608–627 are disordered; the sequence is AASKGNPPPTTTSSPTAAPT. The span at 618-627 shows a compositional bias: low complexity; that stretch reads TTSSPTAAPT. Gly629 is lipidated: GPI-anchor amidated glycine. A propeptide spans 630–652 (removed in mature form); that stretch reads SAMLKAPVAMLAISALTVLAFFL.

It belongs to the peptidase S10 family.

The protein localises to the cell membrane. The catalysed reaction is Preferential release of a C-terminal arginine or lysine residue.. Functionally, extracellular serine carboxypeptidase that contributes to pathogenicity. The chain is Carboxypeptidase S1 homolog A (SCPA) from Trichophyton rubrum (Athlete's foot fungus).